Consider the following 145-residue polypeptide: D-aminoacyl-tRNA deacylase (145 aa).

The short motif at 137 to 138 (GP) is the Gly-cisPro motif, important for rejection of L-amino acids element.

The protein belongs to the DTD family. In terms of assembly, homodimer.

Its subcellular location is the cytoplasm. The enzyme catalyses glycyl-tRNA(Ala) + H2O = tRNA(Ala) + glycine + H(+). The catalysed reaction is a D-aminoacyl-tRNA + H2O = a tRNA + a D-alpha-amino acid + H(+). Its function is as follows. An aminoacyl-tRNA editing enzyme that deacylates mischarged D-aminoacyl-tRNAs. Also deacylates mischarged glycyl-tRNA(Ala), protecting cells against glycine mischarging by AlaRS. Acts via tRNA-based rather than protein-based catalysis; rejects L-amino acids rather than detecting D-amino acids in the active site. By recycling D-aminoacyl-tRNA to D-amino acids and free tRNA molecules, this enzyme counteracts the toxicity associated with the formation of D-aminoacyl-tRNA entities in vivo and helps enforce protein L-homochirality. The protein is D-aminoacyl-tRNA deacylase of Erwinia tasmaniensis (strain DSM 17950 / CFBP 7177 / CIP 109463 / NCPPB 4357 / Et1/99).